The chain runs to 152 residues: 3-hydroxyacyl-[acyl-carrier-protein] dehydratase FabZ (152 aa).

Residue H54 is part of the active site.

The protein belongs to the thioester dehydratase family. FabZ subfamily.

It is found in the cytoplasm. It catalyses the reaction a (3R)-hydroxyacyl-[ACP] = a (2E)-enoyl-[ACP] + H2O. Functionally, involved in unsaturated fatty acids biosynthesis. Catalyzes the dehydration of short chain beta-hydroxyacyl-ACPs and long chain saturated and unsaturated beta-hydroxyacyl-ACPs. This is 3-hydroxyacyl-[acyl-carrier-protein] dehydratase FabZ from Shewanella woodyi (strain ATCC 51908 / MS32).